Reading from the N-terminus, the 661-residue chain is Peroxisomal acyl-coenzyme A oxidase 1 (661 aa).

At S26 the chain carries Phosphoserine. Residue K65 is modified to N6-acetyllysine. N6-succinyllysine is present on residues K89 and K90. Residue T139 participates in FAD binding. K159 is subject to N6-succinyllysine. An FAD-binding site is contributed by G178. K216 is modified (N6-acetyllysine). K241 carries the post-translational modification N6-succinyllysine. K255, K267, and K272 each carry N6-acetyllysine. An N6-succinyllysine modification is found at K349. E421 (proton acceptor) is an active-site residue. K437 and K446 each carry N6-acetyllysine; alternate. An N6-succinyllysine; alternate mark is found at K437 and K446. K500 carries the N6-acetyllysine modification. K512 is modified (N6-acetyllysine; alternate). An N6-succinyllysine; alternate modification is found at K512. K542 is modified (N6-succinyllysine). K637 carries the N6-acetyllysine; alternate modification. K637 carries the N6-succinyllysine; alternate modification. K643 carries the N6-succinyllysine modification. Position 649 is a phosphoserine (S649). K652 carries the post-translational modification N6-acetyllysine. An N6-succinyllysine modification is found at K655. The Microbody targeting signal motif lies at 659–661; sequence SKL.

The protein belongs to the acyl-CoA oxidase family. As to quaternary structure, homodimer. The enzyme contains three components A, B and C, the latter two being produced from the first by a proteolytic cleavage. Interacts with LONP2. It depends on FAD as a cofactor. As to expression, expressed in Schwann cells. Expressed (at protein level) in liver.

The protein resides in the peroxisome. The catalysed reaction is a 2,3-saturated acyl-CoA + O2 = a (2E)-enoyl-CoA + H2O2. The enzyme catalyses hexadecanoyl-CoA + O2 = (2E)-hexadecenoyl-CoA + H2O2. It carries out the reaction dodecanoyl-CoA + O2 = (2E)-dodecenoyl-CoA + H2O2. It catalyses the reaction octanoyl-CoA + O2 = (2E)-octenoyl-CoA + H2O2. The catalysed reaction is decanoyl-CoA + O2 = (2E)-decenoyl-CoA + H2O2. The enzyme catalyses tetradecanoyl-CoA + O2 = (2E)-tetradecenoyl-CoA + H2O2. It carries out the reaction hexadecanedioyl-CoA + O2 = (2E)-hexadecenedioyl-CoA + H2O2. It catalyses the reaction tetracosanoyl-CoA + O2 = (2E)-tetracosenoyl-CoA + H2O2. The catalysed reaction is glutaryl-CoA + O2 = (2E)-glutaconyl-CoA + H2O2. The enzyme catalyses hexanoyl-CoA + O2 = (2E)-hexenoyl-CoA + H2O2. It carries out the reaction octadecanoyl-CoA + O2 = (2E)-octadecenoyl-CoA + H2O2. It catalyses the reaction (5Z,8Z,11Z,14Z,17Z)-eicosapentaenoyl-CoA + O2 = (2E,5Z,8Z,11Z,14Z,17Z)-icosahexaenoyl-CoA + H2O2. The catalysed reaction is (6Z,9Z,12Z,15Z,18Z,21Z)-tetracosahexaenoyl-CoA + O2 = (2E,6Z,9Z,12Z,15Z,18Z,21Z)-tetracosaheptaenoyl-CoA + H2O2. The protein operates within lipid metabolism; peroxisomal fatty acid beta-oxidation. In terms of biological role, involved in the initial and rate-limiting step of peroxisomal beta-oxidation of straight-chain saturated and unsaturated very-long-chain fatty acids. Catalyzes the desaturation of fatty acyl-CoAs such as palmitoyl-CoA (hexadecanoyl-CoA) to 2-trans-enoyl-CoAs ((2E)-enoyl-CoAs) such as (2E)-hexadecenoyl-CoA, and donates electrons directly to molecular oxygen (O(2)), thereby producing hydrogen peroxide (H(2)O(2)). Its function is as follows. Shows highest activity against medium-chain fatty acyl-CoAs. Shows optimum activity with a chain length of 10 carbons (decanoyl-CoA) in vitro. Is active against a much broader range of substrates and shows activity towards long-chain acyl-CoAs. The polypeptide is Peroxisomal acyl-coenzyme A oxidase 1 (Rattus norvegicus (Rat)).